A 262-amino-acid polypeptide reads, in one-letter code: Cytochrome c oxidase subunit 3 (262 aa).

Transmembrane regions (helical) follow at residues 11–31 (LVEP…LTVG), 32–52 (LVMW…VMIV), 83–103 (GMVL…WAFF), 125–147 (LNAF…TVTW), 160–180 (AIQS…LQAW), 198–218 (FFVA…FLMV), and 240–260 (AWYW…IYWW).

This sequence belongs to the cytochrome c oxidase subunit 3 family. Component of the cytochrome c oxidase (complex IV, CIV), a multisubunit enzyme composed of a catalytic core of 3 subunits and several supernumerary subunits. The complex exists as a monomer or a dimer and forms supercomplexes (SCs) in the inner mitochondrial membrane with ubiquinol-cytochrome c oxidoreductase (cytochrome b-c1 complex, complex III, CIII).

It localises to the mitochondrion inner membrane. It catalyses the reaction 4 Fe(II)-[cytochrome c] + O2 + 8 H(+)(in) = 4 Fe(III)-[cytochrome c] + 2 H2O + 4 H(+)(out). Component of the cytochrome c oxidase, the last enzyme in the mitochondrial electron transport chain which drives oxidative phosphorylation. The respiratory chain contains 3 multisubunit complexes succinate dehydrogenase (complex II, CII), ubiquinol-cytochrome c oxidoreductase (cytochrome b-c1 complex, complex III, CIII) and cytochrome c oxidase (complex IV, CIV), that cooperate to transfer electrons derived from NADH and succinate to molecular oxygen, creating an electrochemical gradient over the inner membrane that drives transmembrane transport and the ATP synthase. Cytochrome c oxidase is the component of the respiratory chain that catalyzes the reduction of oxygen to water. Electrons originating from reduced cytochrome c in the intermembrane space (IMS) are transferred via the dinuclear copper A center (CU(A)) of subunit 2 and heme A of subunit 1 to the active site in subunit 1, a binuclear center (BNC) formed by heme A3 and copper B (CU(B)). The BNC reduces molecular oxygen to 2 water molecules using 4 electrons from cytochrome c in the IMS and 4 protons from the mitochondrial matrix. The protein is Cytochrome c oxidase subunit 3 (COIII) of Branchiostoma floridae (Florida lancelet).